A 110-amino-acid chain; its full sequence is uncharacterized protein (110 aa).

This is an uncharacterized protein from Microplitis demolitor bracovirus (isolate Webb) (MdBV).